Consider the following 714-residue polypeptide: Nucleolin (714 aa).

The interval Met1–Glu303 is disordered. Residues Lys9, Lys15, and Lys16 each carry the N6-acetyllysine modification. Over residues Val24–Gly42 the composition is skewed to acidic residues. A phosphoserine mark is found at Ser28, Ser34, Ser40, and Ser41. Residues Ala55 to Pro106 are compositionally biased toward low complexity. Residues Ala57 to Val64 form repeat 1. Residues Ala57–Lys134 are 8 X 8 AA tandem repeats of X-T-P-X-K-K-X-X. Ser66 carries the post-translational modification Phosphoserine. 4 positions are modified to phosphothreonine: Thr68, Thr75, Thr83, and Thr91. Tandem repeats lie at residues Pro74–Ala81, Val82–Ala89, and Ala90–Val97. Residue Lys95 is modified to N6-acetyllysine. Thr98 carries the phosphothreonine modification. The 5; truncated repeat unit spans residues Thr98–Val103. Lys101 bears the N6-acetyllysine mark. Repeat unit 6 spans residues Ala104–Ala111. Residue Thr105 is modified to Phosphothreonine. Lys108 carries the N6-acetyllysine modification. Thr112 bears the Phosphothreonine mark. Position 115 is an N6-acetyllysine (Lys115). 2 tandem repeats follow at residues Ala119 to Ala126 and Val127 to Lys134. A Phosphothreonine modification is found at Thr120. Position 123 is an N6-acetyllysine (Lys123). Phosphoserine is present on residues Ser144 and Ser157. Over residues Ser144 to Glu170 the composition is skewed to acidic residues. The span at Pro171–Ala187 shows a compositional bias: low complexity. The residue at position 188 (Ser188) is a Phosphoserine. Over residues Ser188 to Met216 the composition is skewed to acidic residues. Thr219 is modified (phosphothreonine). A compositionally biased stretch (acidic residues) spans Glu240 to Glu272. Over residues Met285–Gly301 the composition is skewed to basic and acidic residues. Lys298 is covalently cross-linked (Glycyl lysine isopeptide (Lys-Gly) (interchain with G-Cter in SUMO1); alternate). A Glycyl lysine isopeptide (Lys-Gly) (interchain with G-Cter in SUMO2); alternate cross-link involves residue Lys298. Ser302 carries the phosphoserine modification. RRM domains lie at Phe308–Gly384 and Arg394–Glu467. Lys319 carries the post-translational modification N6-acetyllysine. Residue Lys325 forms a Glycyl lysine isopeptide (Lys-Gly) (interchain with G-Cter in SUMO1); alternate linkage. Lys325 is covalently cross-linked (Glycyl lysine isopeptide (Lys-Gly) (interchain with G-Cter in SUMO2); alternate). Lys349 is modified (N6-acetyllysine). Position 357 is a phosphoserine (Ser357). Position 368 is a phosphothreonine (Thr368). Lys371 is covalently cross-linked (Glycyl lysine isopeptide (Lys-Gly) (interchain with G-Cter in SUMO2)). Lys378 is covalently cross-linked (Glycyl lysine isopeptide (Lys-Gly) (interchain with G-Cter in SUMO2); alternate). N6-acetyllysine; alternate is present on Lys378. Position 399 is an N6-acetyllysine (Lys399). The residue at position 402 (Ser402) is a Phosphoserine. Phosphothreonine is present on Thr406. An N6-acetyllysine mark is found at Lys428 and Lys445. Residues Ser459 and Ser461 each carry the phosphoserine modification. N6-acetyllysine occurs at positions 468 and 477. The 75-residue stretch at Lys486–Pro560 folds into the RRM 3 domain. Residue Lys513 forms a Glycyl lysine isopeptide (Lys-Gly) (interchain with G-Cter in SUMO2); alternate linkage. Position 513 is an N6-acetyllysine; alternate (Lys513). An N6-acetyllysine modification is found at Lys521. A Phosphoserine modification is found at Ser563. Lys572 is modified (N6-acetyllysine). Positions Lys572 to Pro647 constitute an RRM 4 domain. Lys577 is covalently cross-linked (Glycyl lysine isopeptide (Lys-Gly) (interchain with G-Cter in SUMO2); alternate). N6-acetyllysine; alternate is present on Lys577. Ser580 carries the post-translational modification Phosphoserine. Lys589 participates in a covalent cross-link: Glycyl lysine isopeptide (Lys-Gly) (interchain with G-Cter in SUMO1); alternate. Residue Lys589 forms a Glycyl lysine isopeptide (Lys-Gly) (interchain with G-Cter in SUMO2); alternate linkage. Residues Ser591 and Ser619 each carry the phosphoserine modification. Residue Lys624 forms a Glycyl lysine isopeptide (Lys-Gly) (interchain with G-Cter in SUMO2) linkage. The tract at residues Leu642–Glu714 is disordered. Lys646 is modified (N6-acetyllysine). Residues Glu650 to Asp703 are compositionally biased toward gly residues. 9 positions are modified to asymmetric dimethylarginine: Arg656, Arg660, Arg666, Arg670, Arg674, Arg680, Arg682, Arg688, and Arg692. Arg695 carries the asymmetric dimethylarginine; alternate modification. Arg695 is subject to Omega-N-methylarginine; alternate.

In terms of assembly, identified in a IGF2BP1-dependent mRNP granule complex containing untranslated mRNAs. Component of the SWAP complex that consists of NPM1, NCL/nucleolin, PARP1 and SWAP70. Component of a complex which is at least composed of HTATSF1/Tat-SF1, the P-TEFb complex components CDK9 and CCNT1, RNA polymerase II, SUPT5H, and NCL/nucleolin. Interacts with AICDA. Interacts with APTX. Interacts with C1QBP. Interacts with ERBB4. Interacts (via C-terminus) with FMR1 isoform 6 (via N-terminus). Interacts with GZF1; this interaction is important for nucleolar localization of GZF1. Interacts with NSUN2. Interacts with NVL. Interacts (via N-terminus domain) with SETX. Interacts (via RRM1 and C-terminal RRM4/Arg/Gly-rich domains) with TERT; the interaction is important for nucleolar localization of TERT. Interacts with WDR46. Interacts with ZFP36. Interacts with LRRC34. Interacts with RRP1B. Interacts with HNRNPU; this interaction occurs during mitosis. Interacts with RIOK1; RIOK1 recruits NCL to PRMT5 for symmetrically methylation. Interacts with ZBTB7B. Interacts with MDK; this interaction promotes NCL clustering and lateral movements of this complex into lipid rafts leading to MDK internalization. Interacts with HDGF. Interacts with ALKBH2. Interacts with IGFBP5; this interaction is necessary for IGFBP5 localization to the nucleus. Interacts with DDX24 (when ubiquitinated); this interaction may be important during ribosome biogenesis. Post-translationally, some glutamate residues are glycylated by TTLL8. This modification occurs exclusively on glutamate residues and results in a glycine chain on the gamma-carboxyl group. Symmetrically methylated by PRMT5.

It is found in the nucleus. The protein resides in the nucleolus. The protein localises to the cytoplasm. Functionally, nucleolin is the major nucleolar protein of growing eukaryotic cells. It is found associated with intranucleolar chromatin and pre-ribosomal particles. It induces chromatin decondensation by binding to histone H1. It is thought to play a role in pre-rRNA transcription and ribosome assembly. May play a role in the process of transcriptional elongation. Binds RNA oligonucleotides with 5'-UUAGGG-3' repeats more tightly than the telomeric single-stranded DNA 5'-TTAGGG-3' repeats. The protein is Nucleolin (NCL) of Mesocricetus auratus (Golden hamster).